We begin with the raw amino-acid sequence, 97 residues long: Ice-structuring protein (97 aa).

An N-terminal signal peptide occupies residues 1–23 (MALSLFTVGQLIFLFWTLRITEA). Positions 24–48 (NPDPAAKAAPAAVADPAAAAAAAVA) are cleaved as a propeptide — removed by a dipeptidylpeptidase.

It belongs to the type-I AFP family. Detected in blood serum (at protein level).

It localises to the secreted. Functionally, contributes to protect fish blood from freezing at subzero sea water temperatures. Lowers the blood freezing point. Binds to nascent ice crystals and prevents further growth. This chain is Ice-structuring protein, found in Myzopsetta ferruginea (Yellowtail flounder).